The chain runs to 62 residues: Teretoxin Tan1.1 (62 aa).

An N-terminal signal peptide occupies residues Met-1–Phe-21. The propeptide occupies Pro-22–Arg-38.

It belongs to the teretoxin A (TA) superfamily. In terms of processing, contains 2 disulfide bonds. Expressed by the venom duct.

Its subcellular location is the secreted. In Terebra anilis (Auger snail), this protein is Teretoxin Tan1.1.